Here is a 239-residue protein sequence, read N- to C-terminus: Ribosomal RNA small subunit methyltransferase G (239 aa).

S-adenosyl-L-methionine is bound by residues glycine 95, leucine 100, 118–120, 146–147, and arginine 164; these read EAT and AE.

This sequence belongs to the methyltransferase superfamily. RNA methyltransferase RsmG family.

It is found in the cytoplasm. The enzyme catalyses guanosine(527) in 16S rRNA + S-adenosyl-L-methionine = N(7)-methylguanosine(527) in 16S rRNA + S-adenosyl-L-homocysteine. Specifically methylates the N7 position of guanine in position 527 of 16S rRNA. The chain is Ribosomal RNA small subunit methyltransferase G from Sorangium cellulosum (strain So ce56) (Polyangium cellulosum (strain So ce56)).